The primary structure comprises 97 residues: Large ribosomal subunit protein uL23 (97 aa).

It belongs to the universal ribosomal protein uL23 family. As to quaternary structure, part of the 50S ribosomal subunit. Contacts protein L29, and trigger factor when it is bound to the ribosome.

In terms of biological role, one of the early assembly proteins it binds 23S rRNA. One of the proteins that surrounds the polypeptide exit tunnel on the outside of the ribosome. Forms the main docking site for trigger factor binding to the ribosome. The chain is Large ribosomal subunit protein uL23 from Sinorhizobium fredii (strain NBRC 101917 / NGR234).